Reading from the N-terminus, the 204-residue chain is ATP synthase subunit b 2 (204 aa).

Positions 8–28 are disordered; it reads AQSSTTEGAEAHDAAAAGEVH. The chain crosses the membrane as a helical span at residues 56–76; sequence LLWLAITFGLFYLLMSKVIIP.

This sequence belongs to the ATPase B chain family. F-type ATPases have 2 components, F(1) - the catalytic core - and F(0) - the membrane proton channel. F(1) has five subunits: alpha(3), beta(3), gamma(1), delta(1), epsilon(1). F(0) has three main subunits: a(1), b(2) and c(10-14). The alpha and beta chains form an alternating ring which encloses part of the gamma chain. F(1) is attached to F(0) by a central stalk formed by the gamma and epsilon chains, while a peripheral stalk is formed by the delta and b chains.

It localises to the cell inner membrane. Its function is as follows. F(1)F(0) ATP synthase produces ATP from ADP in the presence of a proton or sodium gradient. F-type ATPases consist of two structural domains, F(1) containing the extramembraneous catalytic core and F(0) containing the membrane proton channel, linked together by a central stalk and a peripheral stalk. During catalysis, ATP synthesis in the catalytic domain of F(1) is coupled via a rotary mechanism of the central stalk subunits to proton translocation. Component of the F(0) channel, it forms part of the peripheral stalk, linking F(1) to F(0). The b'-subunit is a diverged and duplicated form of b found in plants and photosynthetic bacteria. In Rhizobium meliloti (strain 1021) (Ensifer meliloti), this protein is ATP synthase subunit b 2 (atpF2).